The sequence spans 238 residues: MASYTVSFIPLTLSNPRIFVSRQNGSPSSSSRIPLTSSLLGKKLLATQPSHRCFVPKLRCLTSASTVLNVPIAQPENGSSDKIPKWSARAIKSLAMGELEARKLKYPSTGTEAILMGILVEGTSTVAKFLRGNGVTLFKVRDETLSLLGKSDMYFFSPEHPPLTEPAQKAIAWAIDEKNKSDVDGELTTAYLLLGVWSQKDSAGRQILEKLGFNEDKAKEVEKSMNEDVDLSFKKQGQ.

A chloroplast-targeting transit peptide spans 1–64 (MASYTVSFIP…VPKLRCLTSA (64 aa)). A Clp R domain is found at 83–228 (IPKWSARAIK…KEVEKSMNED (146 aa)). Repeat stretches follow at residues 86–151 (WSAR…LGKS) and 163–228 (LTEP…MNED).

This sequence belongs to the ClpA/ClpB family. As to quaternary structure, monomer and homodimer. Binds to the CLP3-6 ring (P-ring). The dimers monomerize before association to the P-ring. Component of the chloroplastic Clp protease core complex which consist of at least 16 proteins: CLPP4 (3 copies), CLPP5 (3 copies), CLPR4 (2 copies), ClpP1 (1 copy), CLPP6 (1 copy), CLPR2 (1 copy), CLPT1 (1 copy), CLPT2 (1 copy) and 3 copies of CLPP3 and/or CLPR1 and/or CLPR3. Interacts with CLPC2 and CLPD. Interacts with CPN21. No interactions with CLPS1.

The protein localises to the plastid. It localises to the chloroplast. Functionally, accessory protein regulating the assembly of the plastidial Clp protease system. CLPT1 first binds to the heptameric P-ring containing the CLP3-6 subunits followed by CLPT2, and only then does the P-ring combine with the R-ring composed of the clpP1 and CLPR1-4 subunits. Once the core complex is fully assembled, it then associates to the CLPC chaperone partner to form the functional protease. CLPT1 and CLPT2 are partially redundant. The protein is ATP-dependent Clp protease ATP-binding subunit CLPT1, chloroplastic of Arabidopsis thaliana (Mouse-ear cress).